The chain runs to 366 residues: MTRVYNFSAGPAALPEAVLQQAAEEMLDWQGAGCGVMEMSHRGKEFTSIVAQAEADLRELLAIPDNYRVLFLQGGATQQFAQIPMNLLAGGSADYLVTGSWSKKAYGEAKHLAGALGGAVRLAGSTETAGFTRLLRTEELDLDPRARYLHLCTNETIHGVELCEVSRLPDTGVPLVADMSSHILSRPLDIGRYGLIYAGAQKNIGPSGLVVVIVREDLLGHASPVTPTIMDYRVMAENGSMLNTPPTYAIYIAGLVFRWLKAQGGLAAVEANNIAKSDLLYDFLDASDFYENRVAQDSRSRMNIPFLLRDDALNDPFLAGAKAAGLTQLKGHKSVGGMRASIYNAMPLAGVQALVDYMRDFSARNG.

Position 42 (R42) interacts with L-glutamate. Residues 76–77 (AT), W101, T156, D178, and Q201 each bind pyridoxal 5'-phosphate. K202 carries the N6-(pyridoxal phosphate)lysine modification. 243-244 (NT) contacts pyridoxal 5'-phosphate.

This sequence belongs to the class-V pyridoxal-phosphate-dependent aminotransferase family. SerC subfamily. As to quaternary structure, homodimer. Pyridoxal 5'-phosphate serves as cofactor.

It is found in the cytoplasm. It catalyses the reaction O-phospho-L-serine + 2-oxoglutarate = 3-phosphooxypyruvate + L-glutamate. It carries out the reaction 4-(phosphooxy)-L-threonine + 2-oxoglutarate = (R)-3-hydroxy-2-oxo-4-phosphooxybutanoate + L-glutamate. The protein operates within amino-acid biosynthesis; L-serine biosynthesis; L-serine from 3-phospho-D-glycerate: step 2/3. It participates in cofactor biosynthesis; pyridoxine 5'-phosphate biosynthesis; pyridoxine 5'-phosphate from D-erythrose 4-phosphate: step 3/5. Its function is as follows. Catalyzes the reversible conversion of 3-phosphohydroxypyruvate to phosphoserine and of 3-hydroxy-2-oxo-4-phosphonooxybutanoate to phosphohydroxythreonine. This is Phosphoserine aminotransferase from Aromatoleum aromaticum (strain DSM 19018 / LMG 30748 / EbN1) (Azoarcus sp. (strain EbN1)).